The sequence spans 876 residues: Alanine--tRNA ligase (876 aa).

4 residues coordinate Zn(2+): histidine 564, histidine 568, cysteine 666, and histidine 670.

This sequence belongs to the class-II aminoacyl-tRNA synthetase family. As to quaternary structure, homotetramer. Zn(2+) is required as a cofactor.

It localises to the cytoplasm. It carries out the reaction tRNA(Ala) + L-alanine + ATP = L-alanyl-tRNA(Ala) + AMP + diphosphate. Catalyzes the attachment of alanine to tRNA(Ala) in a two-step reaction: alanine is first activated by ATP to form Ala-AMP and then transferred to the acceptor end of tRNA(Ala). Also edits incorrectly charged Ser-tRNA(Ala) and Gly-tRNA(Ala) via its editing domain. In Salmonella typhimurium (strain LT2 / SGSC1412 / ATCC 700720), this protein is Alanine--tRNA ligase.